The chain runs to 788 residues: MTATSPAFFSPQEIAAEGLKPEEYAEIVRRLGRHPNKAELGMFGVMWSEHCCYKNSRPLLKQFPTEGPRILVGPGENAGVVDLGDGLQLAFKIESHNHPSAVEPFQGAATGVGGILRDIFTMGARPIALLNSLRFGSLEDAKTQRLFQGVVAGISHYGNCVGVPTVGGEVYFDPAYSGNPLVNVMALGLMETQEIVKSGASGLGNPVLYVGSTTGRDGMGGASFASAELSDQSIDDRPAVQVGDPFLEKSLIEACLEAFKTGAVVAAQDMGAAGITCSTSEMAAKGGVGIELDLDKIPARETGMVPYEYLLSESQERMLFVAHKGREQELIDIFHRWGLQAVVAGTVIAEPIVRILFQGGVAAEIPAEALAENTPLYNRELLAEPPEYARQAWEWTPDSLPACTTAGIEIQGGQQSWNDILLTLLDTPTIASKNWVYRQYDHQVQNNTVILPGGADAAVIRLRPLEEIPNLKSKIPNLKLGVAATVDCNPRYVYLHPYEGAKAVVAEAARNLSCVGAEPLAVTDNLNFGSPEKPIGYWQLAEACRGLAEGCRELATPVTGGNVSLYNETLDSQGIPQPIYPTPVVGMVGLIPDITKICGQGWQASGDVIYLLGLPLASKISLGASEYLATIHNTVAGKPPLVDFDLERRVQKVCREGIRNGWIRSAHDSAEGGVAIALAECCIAGNLGAEINLEIAPMQNRVDEMLFAEGGARILVSVTSAQQAIWESYLQEHLGQQWQILGTVGNFETGLGVFTTDNQILIKVSIEDMSDRYSHAIARRIATNTAVS.

Residue histidine 50 is part of the active site. Residues tyrosine 53 and lysine 92 each coordinate ATP. Glutamate 94 serves as a coordination point for Mg(2+). Substrate contacts are provided by residues 95–98 (SHNH) and arginine 117. Histidine 96 acts as the Proton acceptor in catalysis. A Mg(2+)-binding site is contributed by aspartate 118. Substrate is bound at residue glutamine 241. Residue aspartate 269 coordinates Mg(2+). A substrate-binding site is contributed by 313 to 315 (ESQ). Residues aspartate 524 and glycine 561 each coordinate ATP. Residue asparagine 562 participates in Mg(2+) binding. Serine 564 serves as a coordination point for substrate.

This sequence belongs to the FGAMS family. Monomer. Part of the FGAM synthase complex composed of 1 PurL, 1 PurQ and 2 PurS subunits.

The protein resides in the cytoplasm. The catalysed reaction is N(2)-formyl-N(1)-(5-phospho-beta-D-ribosyl)glycinamide + L-glutamine + ATP + H2O = 2-formamido-N(1)-(5-O-phospho-beta-D-ribosyl)acetamidine + L-glutamate + ADP + phosphate + H(+). Its pathway is purine metabolism; IMP biosynthesis via de novo pathway; 5-amino-1-(5-phospho-D-ribosyl)imidazole from N(2)-formyl-N(1)-(5-phospho-D-ribosyl)glycinamide: step 1/2. Part of the phosphoribosylformylglycinamidine synthase complex involved in the purines biosynthetic pathway. Catalyzes the ATP-dependent conversion of formylglycinamide ribonucleotide (FGAR) and glutamine to yield formylglycinamidine ribonucleotide (FGAM) and glutamate. The FGAM synthase complex is composed of three subunits. PurQ produces an ammonia molecule by converting glutamine to glutamate. PurL transfers the ammonia molecule to FGAR to form FGAM in an ATP-dependent manner. PurS interacts with PurQ and PurL and is thought to assist in the transfer of the ammonia molecule from PurQ to PurL. The polypeptide is Phosphoribosylformylglycinamidine synthase subunit PurL (Nostoc punctiforme (strain ATCC 29133 / PCC 73102)).